A 473-amino-acid chain; its full sequence is Bifunctional protein GlmU (473 aa).

The interval 1–240 (MAIHPLDVVI…AAQVAGVNSP (240 aa)) is pyrophosphorylase. Residues lysine 25, glutamine 83, 88-89 (GT), 110-112 (SGD), glycine 147, glutamate 165, and asparagine 238 contribute to the UDP-N-acetyl-alpha-D-glucosamine site. Mg(2+) is bound at residue aspartate 112. Residue asparagine 238 coordinates Mg(2+). The interval 241–261 (VQLAELERVYQQRLATTLMEQ) is linker. Positions 262–473 (GVRLADPARL…WARPVKKPGV (212 aa)) are N-acetyltransferase. Arginine 348 and lysine 366 together coordinate UDP-N-acetyl-alpha-D-glucosamine. Residue histidine 378 is the Proton acceptor of the active site. 2 residues coordinate UDP-N-acetyl-alpha-D-glucosamine: tyrosine 381 and asparagine 392. Acetyl-CoA contacts are provided by residues alanine 395, 401 to 402 (NY), serine 420, glycine 438, and arginine 455.

The protein in the N-terminal section; belongs to the N-acetylglucosamine-1-phosphate uridyltransferase family. It in the C-terminal section; belongs to the transferase hexapeptide repeat family. As to quaternary structure, homotrimer. Mg(2+) is required as a cofactor.

It localises to the cytoplasm. The enzyme catalyses alpha-D-glucosamine 1-phosphate + acetyl-CoA = N-acetyl-alpha-D-glucosamine 1-phosphate + CoA + H(+). The catalysed reaction is N-acetyl-alpha-D-glucosamine 1-phosphate + UTP + H(+) = UDP-N-acetyl-alpha-D-glucosamine + diphosphate. The protein operates within nucleotide-sugar biosynthesis; UDP-N-acetyl-alpha-D-glucosamine biosynthesis; N-acetyl-alpha-D-glucosamine 1-phosphate from alpha-D-glucosamine 6-phosphate (route II): step 2/2. It participates in nucleotide-sugar biosynthesis; UDP-N-acetyl-alpha-D-glucosamine biosynthesis; UDP-N-acetyl-alpha-D-glucosamine from N-acetyl-alpha-D-glucosamine 1-phosphate: step 1/1. Its pathway is bacterial outer membrane biogenesis; LPS lipid A biosynthesis. Functionally, catalyzes the last two sequential reactions in the de novo biosynthetic pathway for UDP-N-acetylglucosamine (UDP-GlcNAc). The C-terminal domain catalyzes the transfer of acetyl group from acetyl coenzyme A to glucosamine-1-phosphate (GlcN-1-P) to produce N-acetylglucosamine-1-phosphate (GlcNAc-1-P), which is converted into UDP-GlcNAc by the transfer of uridine 5-monophosphate (from uridine 5-triphosphate), a reaction catalyzed by the N-terminal domain. In Polaromonas naphthalenivorans (strain CJ2), this protein is Bifunctional protein GlmU.